Consider the following 590-residue polypeptide: Arginine--tRNA ligase (590 aa).

The 'HIGH' region motif lies at 131-141 (PNIAKEMHVGH).

Belongs to the class-I aminoacyl-tRNA synthetase family. Monomer.

The protein localises to the cytoplasm. It catalyses the reaction tRNA(Arg) + L-arginine + ATP = L-arginyl-tRNA(Arg) + AMP + diphosphate. This Synechococcus sp. (strain RCC307) protein is Arginine--tRNA ligase.